The sequence spans 139 residues: Ribulose bisphosphate carboxylase small subunit (139 aa).

This sequence belongs to the RuBisCO small chain family. Heterohexadecamer of 8 large and 8 small subunits.

The protein resides in the plastid. It is found in the chloroplast. In terms of biological role, ruBisCO catalyzes two reactions: the carboxylation of D-ribulose 1,5-bisphosphate, the primary event in carbon dioxide fixation, as well as the oxidative fragmentation of the pentose substrate in the photorespiration process. Both reactions occur simultaneously and in competition at the same active site. Although the small subunit is not catalytic it is essential for maximal activity. The sequence is that of Ribulose bisphosphate carboxylase small subunit from Ectocarpus siliculosus (Brown alga).